Consider the following 661-residue polypeptide: Peroxisomal acyl-coenzyme A oxidase 1 (661 aa).

Ser26 is subject to Phosphoserine. N6-acetyllysine is present on Lys65. 2 positions are modified to N6-succinyllysine: Lys89 and Lys90. Thr139 contacts FAD. The residue at position 159 (Lys159) is an N6-succinyllysine. FAD is bound at residue Gly178. Residue Lys216 is modified to N6-acetyllysine. Residue Lys241 is modified to N6-succinyllysine. Residues Lys255, Lys267, and Lys272 each carry the N6-acetyllysine modification. An N6-succinyllysine modification is found at Lys349. The active-site Proton acceptor is the Glu421. 2 positions are modified to N6-acetyllysine; alternate: Lys437 and Lys446. An N6-succinyllysine; alternate mark is found at Lys437 and Lys446. Lys500 carries the post-translational modification N6-acetyllysine. Lys512 carries the post-translational modification N6-acetyllysine; alternate. At Lys512 the chain carries N6-succinyllysine; alternate. Position 542 is an N6-succinyllysine (Lys542). Lys637 is subject to N6-acetyllysine; alternate. Lys637 bears the N6-succinyllysine; alternate mark. Lys643 bears the N6-succinyllysine mark. Ser649 is subject to Phosphoserine. Lys652 carries the post-translational modification N6-acetyllysine. Position 655 is an N6-succinyllysine (Lys655). The Microbody targeting signal signature appears at 659-661; that stretch reads SKL.

Belongs to the acyl-CoA oxidase family. As to quaternary structure, homodimer. Interacts with LONP2. Requires FAD as cofactor. In terms of tissue distribution, highest levels of isoform 1 are found in liver and kidney while highest levels of isoform 2 are found in white adipose tissue. Isoform 1 is expressed at higher levels than isoform 2 in liver and kidney while isoform 2 is expressed at higher levels in brain, heart, lung, muscle, white adipose tissue and testis.

The protein localises to the peroxisome. The catalysed reaction is a 2,3-saturated acyl-CoA + O2 = a (2E)-enoyl-CoA + H2O2. It catalyses the reaction hexadecanoyl-CoA + O2 = (2E)-hexadecenoyl-CoA + H2O2. The enzyme catalyses dodecanoyl-CoA + O2 = (2E)-dodecenoyl-CoA + H2O2. It carries out the reaction octanoyl-CoA + O2 = (2E)-octenoyl-CoA + H2O2. The catalysed reaction is decanoyl-CoA + O2 = (2E)-decenoyl-CoA + H2O2. It catalyses the reaction tetradecanoyl-CoA + O2 = (2E)-tetradecenoyl-CoA + H2O2. The enzyme catalyses hexadecanedioyl-CoA + O2 = (2E)-hexadecenedioyl-CoA + H2O2. It carries out the reaction tetracosanoyl-CoA + O2 = (2E)-tetracosenoyl-CoA + H2O2. The catalysed reaction is glutaryl-CoA + O2 = (2E)-glutaconyl-CoA + H2O2. It catalyses the reaction hexanoyl-CoA + O2 = (2E)-hexenoyl-CoA + H2O2. The enzyme catalyses octadecanoyl-CoA + O2 = (2E)-octadecenoyl-CoA + H2O2. It carries out the reaction (5Z,8Z,11Z,14Z,17Z)-eicosapentaenoyl-CoA + O2 = (2E,5Z,8Z,11Z,14Z,17Z)-icosahexaenoyl-CoA + H2O2. The catalysed reaction is (6Z,9Z,12Z,15Z,18Z,21Z)-tetracosahexaenoyl-CoA + O2 = (2E,6Z,9Z,12Z,15Z,18Z,21Z)-tetracosaheptaenoyl-CoA + H2O2. It participates in lipid metabolism; peroxisomal fatty acid beta-oxidation. In terms of biological role, involved in the initial and rate-limiting step of peroxisomal beta-oxidation of straight-chain saturated and unsaturated very-long-chain fatty acids. Catalyzes the desaturation of fatty acyl-CoAs such as palmitoyl-CoA (hexadecanoyl-CoA) to 2-trans-enoyl-CoAs ((2E)-enoyl-CoAs) such as (2E)-hexadecenoyl-CoA, and donates electrons directly to molecular oxygen (O(2)), thereby producing hydrogen peroxide (H(2)O(2)). Shows highest activity against medium-chain fatty acyl-CoAs. Shows optimum activity with a chain length of 10 carbons (decanoyl-CoA) in vitro. Its function is as follows. Is active against a much broader range of substrates and shows activity towards long-chain acyl-CoAs. In Mus musculus (Mouse), this protein is Peroxisomal acyl-coenzyme A oxidase 1.